The primary structure comprises 757 residues: Protein lsd90 (757 aa).

Composition is skewed to polar residues over residues 1 to 11, 19 to 36, 51 to 69, and 94 to 118; these read MVGTINESMQN, TAQS…SSSK, TAGN…SKNL, and DTSN…STYE. 4 disordered regions span residues 1 to 131, 224 to 244, 589 to 633, and 657 to 757; these read MVGT…SRSS, ERAR…EKQA, AQAE…KSKS, and AYVG…MSNK. A coiled-coil region spans residues 166–604; that stretch reads DEKTLQDLLE…KVESEYNSVK (439 aa). A compositionally biased stretch (basic and acidic residues) spans 589–598; the sequence is AQAEQSKVES. Polar residues predominate over residues 619–632; that stretch reads VTTNEPTDVSTKSK. The segment covering 674 to 693 has biased composition (low complexity); sequence STPSTLPTSASTNAAATTTT. 718 to 725 lines the ATP pocket; sequence GTTGLGKS.

May be involved in the metabolism of very long-chain fatty acid-containing phospholipids (VLCFA-PL). This is Protein lsd90 (lsd90) from Schizosaccharomyces pombe (strain 972 / ATCC 24843) (Fission yeast).